The chain runs to 400 residues: Malonyl CoA-acyl carrier protein transacylase (400 aa).

Active-site residues include Ser92 and His201.

This sequence belongs to the FabD family.

It catalyses the reaction holo-[ACP] + malonyl-CoA = malonyl-[ACP] + CoA. Is involved in the mycosubtilin synthetase assembly, by catalyzing the transfer of malonyl groups to a specific acyl-carrier-protein domain on MycA. This is Malonyl CoA-acyl carrier protein transacylase (fenF) from Bacillus subtilis.